The chain runs to 393 residues: Iripin-5 (393 aa).

Positions 1–16 are cleaved as a signal peptide; sequence MKTLIVLMCSLVVVWA. N-linked (GlcNAc...) asparagine glycans are attached at residues Asn-198 and Asn-245.

This sequence belongs to the serpin family. In terms of tissue distribution, highly expressed in female salivary gland during blood feeding. Expressed in female midgut and ovary during blood feeding.

The protein localises to the secreted. Its function is as follows. Serine protease inhibitor that modulates blood feeding of ticks on vertebrate species. Inhibits host neutrophil elastase (ELANE) and proteinase 3/myeloblastin (PRTN3). Moderately inhibits host chymase, cathepsin G (CTSG), trypsin and alpha-chymotrypsin. Decreases host neutrophil migration. Decreases nitric oxide production by host macrophages. Decreases host complement activity. The protein is Iripin-5 of Ixodes ricinus (Common tick).